Consider the following 281-residue polypeptide: MLGQQQQQQLYSSAALLTGERSRLLSCYVQDYLECVESLPHDMQRNVSVLRELDNKYQETLKEIDDVYEKYKKEDDSNQKKRLQQHLQRALINSQELGDEKIQIVTQMLELVENRARQMELHSQCFQDPAESERASDKSKMDSSQPERSSRRPRRQRTSESRDLCHMTNGIDDCDDQPPKEKRSKSAKKKKRSKAKQEREASPVEFAIDPNEPTYCLCNQVSYGEMIGCDNEQCPIEWFHFSCVSLTYKPKGKWYCPKCRGDNEKTMDKSTEKTKKERRAR.

A coiled-coil region spans residues valine 49–lysine 101. The disordered stretch occupies residues serine 123–valine 204. Residues glutamate 131–methionine 141 are compositionally biased toward basic and acidic residues. Basic residues predominate over residues lysine 182–lysine 194. A Glycyl lysine isopeptide (Lys-Gly) (interchain with G-Cter in SUMO1) cross-link involves residue lysine 196. A PHD-type zinc finger spans residues proline 213–aspartate 262. 8 residues coordinate Zn(2+): cysteine 216, cysteine 218, cysteine 229, cysteine 234, histidine 240, cysteine 243, cysteine 256, and cysteine 259. The span at glycine 261–lysine 275 shows a compositional bias: basic and acidic residues. Positions glycine 261–arginine 281 are disordered. A PBR region spans residues lysine 265–arginine 281.

Belongs to the ING family. In terms of assembly, interacts with H3K4me3 and to a lesser extent with H3K4me2. Component of a mSin3A-like complex at least consisting of SIN3A, HDAC1, HDAC2, RBBP4/RbAp48, RBBP7/RbAp46, SAP30 and ING2. In terms of processing, sumoylation enhances its association with SIN3A and is required for binding to some target gene promoters, this is the case for TMEM71.

It is found in the nucleus. In terms of biological role, seems to be involved in p53/TP53 activation and p53/TP53-dependent apoptotic pathways, probably by enhancing acetylation of p53/TP53. Component of a mSin3A-like corepressor complex, which is probably involved in deacetylation of nucleosomal histones. ING2 activity seems to be modulated by binding to phosphoinositides (PtdInsPs). The chain is Inhibitor of growth protein 2 (Ing2) from Mus musculus (Mouse).